A 46-amino-acid polypeptide reads, in one-letter code: Toxin PhcrTx2 (46 aa).

3 disulfides stabilise this stretch: C4–C40, C6–C32, and C22–C41.

Belongs to the sea anemone type 3 (BDS) potassium channel toxin family.

It localises to the secreted. The protein localises to the nematocyst. Its function is as follows. Neurotoxin that induces paralysis (but not death) to U.thayeri crabs. Partially and reversibly inhibits glutamate-evoked peak currents (IC(50)=4.7 uM) but not voltage-gated potassium channel currents in cultured isolated neurons from the land snail H.aspersa. Weakly inhibits voltage-gated potassium peak currents (IC(50)=6.4 uM) and steady-state currents (IC(50)=8.2 uM) in rat dorsal root ganglion (DRG) neurons. Weakly inhibits voltage-gated sodium currents in rat DRG neurons (IC(50)=0.9 uM). The sequence is that of Toxin PhcrTx2 from Phymanthus crucifer (Red beaded anemone).